Here is a 93-residue protein sequence, read N- to C-terminus: MADITDIKTILYTEKSLNLQEQGVVVIQTSPKMTKTGLKAVLKEYFGVTPKSINSLRMDGKVKRFRGRLGQRNDYKKFYVKLPEGVSLENTEA.

The protein belongs to the universal ribosomal protein uL23 family. In terms of assembly, part of the 50S ribosomal subunit. Contacts protein L29, and trigger factor when it is bound to the ribosome.

Functionally, one of the early assembly proteins it binds 23S rRNA. One of the proteins that surrounds the polypeptide exit tunnel on the outside of the ribosome. Forms the main docking site for trigger factor binding to the ribosome. This is Large ribosomal subunit protein uL23 from Campylobacter jejuni subsp. jejuni serotype O:6 (strain 81116 / NCTC 11828).